Here is a 115-residue protein sequence, read N- to C-terminus: NADH-ubiquinone oxidoreductase chain 3 (115 aa).

3 helical membrane passes run 3 to 23 (LYTVIFINILLSLTLILVAFW), 55 to 75 (FFLVAITFLLFDLEIALLLPL), and 86 to 106 (TMMIMAFILVTILSLGLAYEW).

Belongs to the complex I subunit 3 family. As to quaternary structure, core subunit of respiratory chain NADH dehydrogenase (Complex I) which is composed of 45 different subunits. Interacts with TMEM186. Interacts with TMEM242.

The protein localises to the mitochondrion inner membrane. The enzyme catalyses a ubiquinone + NADH + 5 H(+)(in) = a ubiquinol + NAD(+) + 4 H(+)(out). Core subunit of the mitochondrial membrane respiratory chain NADH dehydrogenase (Complex I) which catalyzes electron transfer from NADH through the respiratory chain, using ubiquinone as an electron acceptor. Essential for the catalytic activity of complex I. The protein is NADH-ubiquinone oxidoreductase chain 3 of Mus musculus (Mouse).